A 736-amino-acid polypeptide reads, in one-letter code: Catalase-1 (736 aa).

The segment at 1 to 29 is disordered; the sequence is MSNIISQAGQKAKEALTSAPSSKKVDDLK. Position 89 (arginine 89) interacts with heme. Histidine 92 is an active-site residue. Residue arginine 129 coordinates heme. Residue asparagine 165 is part of the active site. Heme is bound by residues phenylalanine 178, arginine 375, tyrosine 379, and arginine 386. The segment at residues 356–379 is a cross-link (3-(S-cysteinyl)-tyrosine (Cys-Tyr)); sequence CTSHVVNGIGFSDDPLLQGRNFSY.

Belongs to the catalase family. In terms of assembly, homotetramer. Heme is required as a cofactor. Post-translationally, glycosylated; with alpha-glucose and/or alpha-mannose.

It localises to the secreted. The protein resides in the cell wall. It catalyses the reaction 2 H2O2 = O2 + 2 H2O. Its function is as follows. Occurs in almost all aerobically respiring organisms and serves to protect cells from the toxic effects of hydrogen peroxide. The protein is Catalase-1 (cat-1) of Neurospora crassa (strain ATCC 24698 / 74-OR23-1A / CBS 708.71 / DSM 1257 / FGSC 987).